Reading from the N-terminus, the 83-residue chain is Small ribosomal subunit protein bS16 (83 aa).

This sequence belongs to the bacterial ribosomal protein bS16 family.

The protein is Small ribosomal subunit protein bS16 of Polaromonas sp. (strain JS666 / ATCC BAA-500).